The sequence spans 204 residues: High frequency lysogenization protein HflD homolog (204 aa).

This sequence belongs to the HflD family.

It is found in the cytoplasm. The protein localises to the cell inner membrane. In Xylella fastidiosa (strain M23), this protein is High frequency lysogenization protein HflD homolog.